Consider the following 194-residue polypeptide: Small ribosomal subunit protein uS4c (194 aa).

The S4 RNA-binding domain maps to 82-143 (MRLDNILFRL…KERSKVLIQN (62 aa)).

This sequence belongs to the universal ribosomal protein uS4 family. As to quaternary structure, part of the 30S ribosomal subunit. Contacts protein S5. The interaction surface between S4 and S5 is involved in control of translational fidelity.

It localises to the plastid. It is found in the chloroplast. Functionally, one of the primary rRNA binding proteins, it binds directly to 16S rRNA where it nucleates assembly of the body of the 30S subunit. With S5 and S12 plays an important role in translational accuracy. This Cypella sp. (strain Porto Alegre 027) protein is Small ribosomal subunit protein uS4c (rps4).